A 205-amino-acid polypeptide reads, in one-letter code: MLTVALSKGRLLKDFIKFLERNNNHVWADAIIHRERKLQITADSIKFILVKGSDVPTYVEEGIADIGITGSDILKERPNRNINNYIDLPFGECHFSVAAKPNVTNIQRVATTYVKTTRDYFNQKGTDISIIQLSGSVELAAVVDMVDAIVDIVQTGTTLKSNGLEEREQIGEINARLITNKHSFFSKSKAIENFIQQLGVSIHAQ.

Belongs to the ATP phosphoribosyltransferase family. Short subfamily. In terms of assembly, heteromultimer composed of HisG and HisZ subunits.

The protein resides in the cytoplasm. The enzyme catalyses 1-(5-phospho-beta-D-ribosyl)-ATP + diphosphate = 5-phospho-alpha-D-ribose 1-diphosphate + ATP. The protein operates within amino-acid biosynthesis; L-histidine biosynthesis; L-histidine from 5-phospho-alpha-D-ribose 1-diphosphate: step 1/9. Functionally, catalyzes the condensation of ATP and 5-phosphoribose 1-diphosphate to form N'-(5'-phosphoribosyl)-ATP (PR-ATP). Has a crucial role in the pathway because the rate of histidine biosynthesis seems to be controlled primarily by regulation of HisG enzymatic activity. The chain is ATP phosphoribosyltransferase from Staphylococcus carnosus (strain TM300).